Here is a 318-residue protein sequence, read N- to C-terminus: Nucleotide-binding protein Jann_0539 (318 aa).

Residue 17–24 (GPSGAGRS) coordinates ATP. Residue 64–67 (DPRT) coordinates GTP. The disordered stretch occupies residues 278-318 (GWQVSKRHRDVDKDASENSDRDRGASARTAASTDDGEAEQP). The segment covering 286-302 (RDVDKDASENSDRDRGA) has biased composition (basic and acidic residues).

This sequence belongs to the RapZ-like family.

In terms of biological role, displays ATPase and GTPase activities. The protein is Nucleotide-binding protein Jann_0539 of Jannaschia sp. (strain CCS1).